A 556-amino-acid chain; its full sequence is Energy-dependent translational throttle protein EttA (556 aa).

ABC transporter domains follow at residues 7 to 260 and 325 to 551; these read YTMH…EQEQ and IEVQ…RIKY. 40–47 serves as a coordination point for ATP; it reads GLNGAGKS. The interval 96–140 is arm; it reads SEVKNALTRLDEVYALYADPDADFDKLAAEQANLEAIIQAHDGHN. The ptIM stretch occupies residues 243–323; it reads GNYSSWLEQK…IPPGPRLGDK (81 aa). 357-364 provides a ligand contact to ATP; that stretch reads GANGAGKS.

It belongs to the ABC transporter superfamily. ABCF family. Translational throttle EttA subfamily. As to quaternary structure, monomer. Probably contacts ribosomal proteins L1, L5, L33 and S7, the 16S and 23S rRNA and the P-site containing tRNA(fMet).

Its subcellular location is the cytoplasm. The catalysed reaction is ATP + H2O = ADP + phosphate + H(+). A translation factor that gates the progression of the 70S ribosomal initiation complex (IC, containing tRNA(fMet) in the P-site) into the translation elongation cycle by using a mechanism sensitive to the ATP/ADP ratio. Binds to the 70S ribosome E-site where it modulates the state of the translating ribosome during subunit translocation. ATP hydrolysis probably frees it from the ribosome, which can enter the elongation phase. The sequence is that of Energy-dependent translational throttle protein EttA from Haemophilus influenzae (strain ATCC 51907 / DSM 11121 / KW20 / Rd).